The chain runs to 42 residues: Photosystem II reaction center protein J (42 aa).

Residues 10–30 (IPLWLVGTVAGILVLGLVGLF) traverse the membrane as a helical segment.

The protein belongs to the PsbJ family. In terms of assembly, PSII is composed of 1 copy each of membrane proteins PsbA, PsbB, PsbC, PsbD, PsbE, PsbF, PsbH, PsbI, PsbJ, PsbK, PsbL, PsbM, PsbT, PsbX, PsbY, PsbZ, Psb30/Ycf12, at least 3 peripheral proteins of the oxygen-evolving complex and a large number of cofactors. It forms dimeric complexes.

Its subcellular location is the plastid. The protein resides in the chloroplast thylakoid membrane. In terms of biological role, one of the components of the core complex of photosystem II (PSII). PSII is a light-driven water:plastoquinone oxidoreductase that uses light energy to abstract electrons from H(2)O, generating O(2) and a proton gradient subsequently used for ATP formation. It consists of a core antenna complex that captures photons, and an electron transfer chain that converts photonic excitation into a charge separation. The sequence is that of Photosystem II reaction center protein J from Staurastrum punctulatum (Green alga).